Consider the following 464-residue polypeptide: Isthmin-1 (464 aa).

A signal peptide spans 1–29 (MVRLAAELLLLLGLLLLTLHITVLRGSGA). N-linked (GlcNAc...) asparagine glycosylation occurs at Asn39. Disordered stretches follow at residues 50–98 (NVGS…LQRD), 135–155 (PDSEADKDQHPENKPSWSVPS), and 173–219 (SGDQ…STDG). The segment covering 51 to 63 (VGSDTTSETSFSL) has biased composition (polar residues). 2 stretches are compositionally biased toward basic and acidic residues: residues 66-76 (EAPREHLDHQA) and 138-147 (EADKDQHPEN). The TSP type-1 domain maps to 218-262 (DGEGDWSLWSVCSVTCGNGNQKRTRSCGYACTATESRTCDRPNCP). 3 cysteine pairs are disulfide-bonded: Cys229-Cys256, Cys233-Cys261, and Cys244-Cys248. An AMOP domain is found at 289-452 (LFEVDTDSCE…QKCTESPSDE (164 aa)).

The protein belongs to the isthmin family. Interacts with integrin ITGAV/ITGB5.

Its subcellular location is the secreted. Acts as an angiogenesis inhibitor. The chain is Isthmin-1 (ISM1) from Homo sapiens (Human).